Reading from the N-terminus, the 195-residue chain is Transcriptional regulator GfcR (195 aa).

The protein belongs to the purine/pyrimidine phosphoribosyltransferase family. GfcR subfamily.

The polypeptide is Transcriptional regulator GfcR (Archaeoglobus fulgidus (strain ATCC 49558 / DSM 4304 / JCM 9628 / NBRC 100126 / VC-16)).